We begin with the raw amino-acid sequence, 299 residues long: Tetrahydromethanopterin S-methyltransferase subunit E (299 aa).

A run of 6 helical transmembrane segments spans residues 57-77 (AISG…SVAW), 80-100 (INAG…AAIV), 133-153 (IGPI…AAYL), 158-178 (LGNP…VGAI), 237-257 (GLCF…GNII), and 261-281 (LVTK…AAMI).

This sequence belongs to the MtrE family. In terms of assembly, the complex is composed of 8 subunits; MtrA, MtrB, MtrC, MtrD, MtrE, MtrF, MtrG and MtrH.

The protein resides in the cell membrane. It carries out the reaction 5-methyl-5,6,7,8-tetrahydromethanopterin + coenzyme M + 2 Na(+)(in) = 5,6,7,8-tetrahydromethanopterin + methyl-coenzyme M + 2 Na(+)(out). Its pathway is one-carbon metabolism; methanogenesis from CO(2); methyl-coenzyme M from 5,10-methylene-5,6,7,8-tetrahydromethanopterin: step 2/2. In terms of biological role, part of a complex that catalyzes the formation of methyl-coenzyme M and tetrahydromethanopterin from coenzyme M and methyl-tetrahydromethanopterin. This is an energy-conserving, sodium-ion translocating step. The sequence is that of Tetrahydromethanopterin S-methyltransferase subunit E from Methanococcus vannielii (strain ATCC 35089 / DSM 1224 / JCM 13029 / OCM 148 / SB).